Consider the following 286-residue polypeptide: Probable ketoamine kinase EAE_16955 (286 aa).

E92 to L94 contributes to the ATP binding site. The Proton acceptor role is filled by D194.

Belongs to the fructosamine kinase family.

Ketoamine kinase that phosphorylates ketoamines on the third carbon of the sugar moiety to generate ketoamine 3-phosphate. The chain is Probable ketoamine kinase EAE_16955 from Klebsiella aerogenes (strain ATCC 13048 / DSM 30053 / CCUG 1429 / JCM 1235 / KCTC 2190 / NBRC 13534 / NCIMB 10102 / NCTC 10006 / CDC 819-56) (Enterobacter aerogenes).